We begin with the raw amino-acid sequence, 877 residues long: Leucine--tRNA ligase (877 aa).

Positions 48–58 (PYPSGKLHMGH) match the 'HIGH' region motif. The 'KMSKS' region signature appears at 636–640 (KMSKS). Lys639 is an ATP binding site.

This sequence belongs to the class-I aminoacyl-tRNA synthetase family.

The protein resides in the cytoplasm. It catalyses the reaction tRNA(Leu) + L-leucine + ATP = L-leucyl-tRNA(Leu) + AMP + diphosphate. In Ralstonia pickettii (strain 12J), this protein is Leucine--tRNA ligase.